The sequence spans 335 residues: Beta-ketoacyl-[acyl-carrier-protein] synthase III (335 aa).

Active-site residues include Cys-119 and His-261. The segment at 262–266 (QANQR) is ACP-binding. The active site involves Asn-291.

This sequence belongs to the thiolase-like superfamily. FabH family. In terms of assembly, homodimer.

It is found in the cytoplasm. The enzyme catalyses malonyl-[ACP] + acetyl-CoA + H(+) = 3-oxobutanoyl-[ACP] + CO2 + CoA. It functions in the pathway lipid metabolism; fatty acid biosynthesis. Catalyzes the condensation reaction of fatty acid synthesis by the addition to an acyl acceptor of two carbons from malonyl-ACP. Catalyzes the first condensation reaction which initiates fatty acid synthesis and may therefore play a role in governing the total rate of fatty acid production. Possesses both acetoacetyl-ACP synthase and acetyl transacylase activities. Its substrate specificity determines the biosynthesis of branched-chain and/or straight-chain of fatty acids. This is Beta-ketoacyl-[acyl-carrier-protein] synthase III from Prochlorococcus marinus (strain MIT 9301).